The following is a 368-amino-acid chain: High affinity transport system protein p37 (368 aa).

Residues 1 to 25 form the signal peptide; that stretch reads MLFKKFTWVIPSLFLTIISTSLLIS. Residue C26 is the site of N-palmitoyl cysteine attachment. A lipid anchor (S-diacylglycerol cysteine) is attached at C26.

The protein resides in the cell membrane. P37 is part of a high-affinity transport system. The sequence is that of High affinity transport system protein p37 (p37) from Mycoplasma genitalium (strain ATCC 33530 / DSM 19775 / NCTC 10195 / G37) (Mycoplasmoides genitalium).